Consider the following 234-residue polypeptide: 1-(5-phosphoribosyl)-5-[(5-phosphoribosylamino)methylideneamino] imidazole-4-carboxamide isomerase (234 aa).

D9 serves as the catalytic Proton acceptor. Catalysis depends on D131, which acts as the Proton donor.

This sequence belongs to the HisA/HisF family.

The protein resides in the cytoplasm. The enzyme catalyses 1-(5-phospho-beta-D-ribosyl)-5-[(5-phospho-beta-D-ribosylamino)methylideneamino]imidazole-4-carboxamide = 5-[(5-phospho-1-deoxy-D-ribulos-1-ylimino)methylamino]-1-(5-phospho-beta-D-ribosyl)imidazole-4-carboxamide. It functions in the pathway amino-acid biosynthesis; L-histidine biosynthesis; L-histidine from 5-phospho-alpha-D-ribose 1-diphosphate: step 4/9. This chain is 1-(5-phosphoribosyl)-5-[(5-phosphoribosylamino)methylideneamino] imidazole-4-carboxamide isomerase, found in Staphylococcus epidermidis (strain ATCC 35984 / DSM 28319 / BCRC 17069 / CCUG 31568 / BM 3577 / RP62A).